The following is a 426-amino-acid chain: Serine hydroxymethyltransferase (426 aa).

(6S)-5,6,7,8-tetrahydrofolate contacts are provided by residues Leu122 and 126–128 (GHL). Position 231 is an N6-(pyridoxal phosphate)lysine (Lys231). (6S)-5,6,7,8-tetrahydrofolate-binding positions include Glu247 and 355–357 (SPF).

It belongs to the SHMT family. In terms of assembly, homodimer. Requires pyridoxal 5'-phosphate as cofactor.

Its subcellular location is the cytoplasm. The catalysed reaction is (6R)-5,10-methylene-5,6,7,8-tetrahydrofolate + glycine + H2O = (6S)-5,6,7,8-tetrahydrofolate + L-serine. Its pathway is one-carbon metabolism; tetrahydrofolate interconversion. It functions in the pathway amino-acid biosynthesis; glycine biosynthesis; glycine from L-serine: step 1/1. In terms of biological role, catalyzes the reversible interconversion of serine and glycine with tetrahydrofolate (THF) serving as the one-carbon carrier. This reaction serves as the major source of one-carbon groups required for the biosynthesis of purines, thymidylate, methionine, and other important biomolecules. Also exhibits THF-independent aldolase activity toward beta-hydroxyamino acids, producing glycine and aldehydes, via a retro-aldol mechanism. This is Serine hydroxymethyltransferase from Cyanothece sp. (strain PCC 7425 / ATCC 29141).